We begin with the raw amino-acid sequence, 510 residues long: NAD(P)H-quinone oxidoreductase subunit 2, chloroplastic (510 aa).

Helical transmembrane passes span 24 to 44 (LLLFNGSFIFPECILIFGLIL), 59 to 79 (WFYFISSTSLVMSITALLFRW), 99 to 119 (IFQFLILLCSTLCIPLSVEYI), 124 to 144 (MAITEFLLFVLTATLGGMFLC), 149 to 169 (LITIFVAPECFSLCSYLLSGY), 183 to 203 (YLLMGGASSSILVHGFSWLYG), 229 to 249 (ISIALISITVGIGFKLSPAPF), 295 to 315 (WHLLLEILAILSMILGNLIAI), 323 to 343 (MLAYSSIGQIGYVIIGIIVGD), 347 to 367 (GYASMITYMLFYISMNLGTFA), 395 to 415 (ALSSALCLLSLGGLPPLAGFF), and 418 to 438 (LHLFWCGWQAGLYFLVSIGLL).

It belongs to the complex I subunit 2 family. NDH is composed of at least 16 different subunits, 5 of which are encoded in the nucleus.

Its subcellular location is the plastid. It localises to the chloroplast thylakoid membrane. It carries out the reaction a plastoquinone + NADH + (n+1) H(+)(in) = a plastoquinol + NAD(+) + n H(+)(out). The enzyme catalyses a plastoquinone + NADPH + (n+1) H(+)(in) = a plastoquinol + NADP(+) + n H(+)(out). In terms of biological role, NDH shuttles electrons from NAD(P)H:plastoquinone, via FMN and iron-sulfur (Fe-S) centers, to quinones in the photosynthetic chain and possibly in a chloroplast respiratory chain. The immediate electron acceptor for the enzyme in this species is believed to be plastoquinone. Couples the redox reaction to proton translocation, and thus conserves the redox energy in a proton gradient. This is NAD(P)H-quinone oxidoreductase subunit 2, chloroplastic from Allium textile (Textile onion).